The chain runs to 163 residues: Nucleotide-binding protein YPDSF_2805 (163 aa).

The protein belongs to the YajQ family.

Functionally, nucleotide-binding protein. This Yersinia pestis (strain Pestoides F) protein is Nucleotide-binding protein YPDSF_2805.